The chain runs to 145 residues: Maximins 5/H4 type 1 (145 aa).

The N-terminal stretch at 1–18 (MNFKYIVAVSFLIASAYA) is a signal peptide. Propeptides lie at residues 19 to 43 (RSVQ…REIR) and 74 to 124 (TAEE…KEKR). A Leucine amide modification is found at Leu144.

Belongs to the bombinin family. As to expression, expressed by the skin glands.

The protein localises to the secreted. Maximin-5 shows antibacterial activity against both Gram-positive and Gram-negative bacteria. The only exception is the resistance of E.coli. Also shows antimicrobial activity against fungi C.albicans, A.flavus and P.uticale. It has little hemolytic activity. It does not possess a significant cytotoxicity against tumor cell lines. It does not possess a significant anti-HIV activity. Functionally, maximin-H4 shows antibacterial activity against both Gram-positive and Gram-negative bacteria. It also shows antimicrobial activity against the fungus C.albicans. Shows strong hemolytic activity. The protein is Maximins 5/H4 type 1 of Bombina maxima (Giant fire-bellied toad).